The following is a 272-amino-acid chain: Imidazole glycerol phosphate synthase subunit HisF (272 aa).

Catalysis depends on residues D11 and D130.

It belongs to the HisA/HisF family. In terms of assembly, heterodimer of HisH and HisF.

The protein resides in the cytoplasm. It carries out the reaction 5-[(5-phospho-1-deoxy-D-ribulos-1-ylimino)methylamino]-1-(5-phospho-beta-D-ribosyl)imidazole-4-carboxamide + L-glutamine = D-erythro-1-(imidazol-4-yl)glycerol 3-phosphate + 5-amino-1-(5-phospho-beta-D-ribosyl)imidazole-4-carboxamide + L-glutamate + H(+). It functions in the pathway amino-acid biosynthesis; L-histidine biosynthesis; L-histidine from 5-phospho-alpha-D-ribose 1-diphosphate: step 5/9. IGPS catalyzes the conversion of PRFAR and glutamine to IGP, AICAR and glutamate. The HisF subunit catalyzes the cyclization activity that produces IGP and AICAR from PRFAR using the ammonia provided by the HisH subunit. The sequence is that of Imidazole glycerol phosphate synthase subunit HisF from Methanococcus maripaludis (strain C5 / ATCC BAA-1333).